A 1191-amino-acid polypeptide reads, in one-letter code: MDANDFPRLFYTSMPSSSTSNHRIDRLSSSSSSTFRRDDFRRHSTTTSSEKFSTISIGESVKLEEENGEIPEKFVQEEDTVVKTEETRVSDCDFSLTFYTAHVTSSSMLSRGDSSSINNKTFTPDDHYSNPSDKRREVPSIRSTSSNSSSFGGHVAFVDEPSEENQRQQQQYQQHQFQLPTLLVTSTPSTVFDQNDDDVFTSPYHPPNRQYSSSSEMSGLSFQLQSGIHKKSIAVEGNEIALRDLRNEAFQFVKEIYPEKKCGSLEDYILLYKHDLRSINILQLITTSSDVTDGTLVEIVIGSCPQNERIVVHPHTLFVHSYKVPTFCDFCGELLFGLVKQGLKCFGCGLNYHKRCASKIPNNCNGSKQRRPSAIPLSPSNSNILNLNERRQSRRDSCLEALDAARPSSTLGGAATPNIFITSDDCGDPVGGNFLQMPRKDRSCSWSGRPLWMEIAEATRVKIQVPHTFQVHSYKLPTVCQHCKKLLKGLLRQGMQCRGENETEKLQNGAVAKYCKYNCHKKCSEHVAKDCSGNTKASQFFLGTADDGVSEDRDDDLSLRSGSGGHKKAQNTPSAPLQGSEGSGSPGGAVVSFAQGLSNAPDDDVISSESANIPLMRVVMSKKQTKRKNNKLLKEGWIVHYTDQQNMRKKHYWRLDTKGITMYQDENTTRYYKEIPLNEILGVMTSSPEKSSEYLFEIRTGACVYFVYSSLTDEELYNIIHASPCIARKPSTVSSTDSGYLGSSGASSSCVRSREGSTVSSTITVDRTRRGGSTTSTENSEAESESSYSSFASIASTASKYLGRAADCLVLMTKRNGWSDAGSPADEKSSGSLDAQSWTTAIQSALMPVTPQSSVVGGKRVDKLKVPTEGETGHLGAKIQTEQEFSQLYQIFAEEVLGSGQFGTVYGGIHRRNGQHVAVKLIDKLKFPPNKEDLLRAEVQILEQVDHPGVVHFMQMLETTDRIFVVMEKLKGDMLEMILSSEKGRLSERTTQFLVAQILEALRYLHHQNIVHCDLKPENILLNSNSDFPQVKLCDFGFARIIGEKSFRRSVVGTPAYLAPEVLRNKGFNRSLDMWSVGVIVYVSLSGTFPFNEDEDINDQIQNAEFMYPPSPWKEISENAIEFINGLLQVKMSKRYTVAKAQSHIWMQNYTIWSDLRVLEKAVGQRFVTHESDDSRWHAYEKEHNVTPVYV.

2 disordered regions span residues 11-48 (YTSM…TTTS) and 108-155 (MLSR…GGHV). Residues 123 to 139 (TPDDHYSNPSDKRREVP) are compositionally biased toward basic and acidic residues. Low complexity predominate over residues 140-150 (SIRSTSSNSSS). 2 consecutive Phorbol-ester/DAG-type zinc fingers follow at residues 314-364 (PHTL…PNNC) and 466-531 (PHTF…AKDC). Residues 549–594 (VSEDRDDDLSLRSGSGGHKKAQNTPSAPLQGSEGSGSPGGAVVSFA) form a disordered region. The 82-residue stretch at 632–713 (LLKEGWIVHY…VYFVYSSLTD (82 aa)) folds into the PH domain. A disordered region spans residues 730-786 (PSTVSSTDSGYLGSSGASSSCVRSREGSTVSSTITVDRTRRGGSTTSTENSEAESES). A compositionally biased stretch (low complexity) spans 738–751 (SGYLGSSGASSSCV). Residues 756 to 765 (GSTVSSTITV) show a composition bias toward polar residues. A compositionally biased stretch (low complexity) spans 773 to 786 (STTSTENSEAESES). The region spanning 891 to 1147 (IFAEEVLGSG…VAKAQSHIWM (257 aa)) is the Protein kinase domain. ATP contacts are provided by residues 897–905 (LGSGQFGTV) and Lys-920. The active-site Proton acceptor is the Asp-1014. Residues Ser-1046 and Ser-1050 each carry the phosphoserine modification.

It belongs to the protein kinase superfamily. CAMK Ser/Thr protein kinase family. PKD subfamily. The cofactor is Mg(2+). Phosphorylation on Ser-1046 is the dominant regulator of catalysis, phosphorylation on Ser-1050 has a lesser effect. Prolonged phosphorylation results in ubiquitination and degradation.

It localises to the cytoplasm. It is found in the membrane. It carries out the reaction L-seryl-[protein] + ATP = O-phospho-L-seryl-[protein] + ADP + H(+). The catalysed reaction is L-threonyl-[protein] + ATP = O-phospho-L-threonyl-[protein] + ADP + H(+). Its activity is regulated as follows. Activated by DAG and phorbol esters. Phorbol-ester/DAG-type domain 1 binds phorbol ester with low affinity. Phorbol-ester/DAG-type domain 2 binds phorbol ester with high affinity and targets the kinase to the cell periphery, enabling phosphorylation and activation by colocalized tpa-1. Both domains 1 and 2 appear to bind DAG with equal affinity so may contribute equally to translocation and activation. Converts transient diacylglycerol (DAG) signals into prolonged physiological effects, downstream of PKC. Acts in the intestine to regulate both innate immunity by promoting activation of pmk-1 and also stress response and life span by acting as an upstream, negative regulator of the daf-16 transcription factor. In Caenorhabditis briggsae, this protein is Serine/threonine-protein kinase dkf-2.